Here is a 72-residue protein sequence, read N- to C-terminus: Sperm protein associated with the nucleus on the X chromosome N1 (72 aa).

Residues 1–44 (MEQPTSSINGEKRKSPCESNNENDEMQETPNRDLAPEPSLKKMK) are disordered.

Belongs to the SPAN-X family.

In Homo sapiens (Human), this protein is Sperm protein associated with the nucleus on the X chromosome N1 (SPANXN1).